The chain runs to 263 residues: Chymotrypsinogen B (263 aa).

The N-terminal stretch at 1–18 (MASLWLLSCFSLVGAAFG) is a signal peptide. Cystine bridges form between Cys19–Cys140, Cys60–Cys76, Cys154–Cys219, Cys186–Cys200, and Cys209–Cys238. The Peptidase S1 domain maps to 34-261 (IVNGEDAVPG…LIPWVQKILA (228 aa)). The active-site Charge relay system is His75. Residue Ser93 is modified to Phosphoserine. Catalysis depends on Asp120, which acts as the Charge relay system. The Charge relay system role is filled by Ser213.

This sequence belongs to the peptidase S1 family.

The protein localises to the secreted. It localises to the extracellular space. It carries out the reaction Preferential cleavage: Tyr-|-Xaa, Trp-|-Xaa, Phe-|-Xaa, Leu-|-Xaa.. The chain is Chymotrypsinogen B from Homo sapiens (Human).